The chain runs to 289 residues: ATP synthase gamma chain (289 aa).

It belongs to the ATPase gamma chain family. As to quaternary structure, F-type ATPases have 2 components, CF(1) - the catalytic core - and CF(0) - the membrane proton channel. CF(1) has five subunits: alpha(3), beta(3), gamma(1), delta(1), epsilon(1). CF(0) has three main subunits: a, b and c.

It localises to the cell membrane. Its function is as follows. Produces ATP from ADP in the presence of a proton gradient across the membrane. The gamma chain is believed to be important in regulating ATPase activity and the flow of protons through the CF(0) complex. This chain is ATP synthase gamma chain, found in Hamiltonella defensa subsp. Acyrthosiphon pisum (strain 5AT).